A 142-amino-acid chain; its full sequence is COA8 family protein CBG23705, mitochondrial (142 aa).

It belongs to the COA8 family.

Its subcellular location is the mitochondrion inner membrane. Functionally, may be required for cytochrome c complex (COX) assembly and function, COX being the terminal component of the mitochondrial respiratory chain. In Caenorhabditis briggsae, this protein is COA8 family protein CBG23705, mitochondrial.